A 660-amino-acid chain; its full sequence is Acetyl-coenzyme A synthetase (660 aa).

CoA contacts are provided by residues 197–200 (RGGK) and T317. ATP is bound by residues 397–399 (GEP), 421–426 (DTFWQT), D512, and R528. S536 contacts CoA. R539 is an ATP binding site. Residues V550 and V555 each contribute to the Mg(2+) site. Residue K625 is modified to N6-acetyllysine.

It belongs to the ATP-dependent AMP-binding enzyme family. Mg(2+) is required as a cofactor. In terms of processing, acetylated. Deacetylation by the SIR2-homolog deacetylase activates the enzyme.

It carries out the reaction acetate + ATP + CoA = acetyl-CoA + AMP + diphosphate. Functionally, catalyzes the conversion of acetate into acetyl-CoA (AcCoA), an essential intermediate at the junction of anabolic and catabolic pathways. AcsA undergoes a two-step reaction. In the first half reaction, AcsA combines acetate with ATP to form acetyl-adenylate (AcAMP) intermediate. In the second half reaction, it can then transfer the acetyl group from AcAMP to the sulfhydryl group of CoA, forming the product AcCoA. The polypeptide is Acetyl-coenzyme A synthetase (Herminiimonas arsenicoxydans).